Consider the following 590-residue polypeptide: UvrABC system protein C (590 aa).

In terms of domain architecture, GIY-YIG spans 14–91; sequence EQPGCYLMKD…IKKHDPKYNV (78 aa). One can recognise a UVR domain in the interval 196–231; it reads EDVKRELAEKMHEAAETLEFERAKEYRDQIAAIEMT.

The protein belongs to the UvrC family. As to quaternary structure, interacts with UvrB in an incision complex.

The protein resides in the cytoplasm. Functionally, the UvrABC repair system catalyzes the recognition and processing of DNA lesions. UvrC both incises the 5' and 3' sides of the lesion. The N-terminal half is responsible for the 3' incision and the C-terminal half is responsible for the 5' incision. In Geobacillus kaustophilus (strain HTA426), this protein is UvrABC system protein C.